A 969-amino-acid chain; its full sequence is MTESPTTSPATGSGAAAPDSDAPPYRYTAALAGRIEGSWQDTWAKLGTFNVPNPVGSLAPTDGTPVPEDKLFVQDMFPYPSGEGLHVGHPLGYIATDVYARYFRMTGRNVLHALGFDAFGLPAEQYAVQTGTHPRTRTEANVVNFRRQLGRLGLGHDSRRSFSTTDVEFYKWTQWIFLQIYNAWFDPAANKARPIAELVAEFDSGARSLDDGRNWSELSAGERADVIDSHRLVYRADSMVNWCPGLGTVLANEEVTADGRSDRGNFPVFRKRLRQWMMRITAYSDRLLDDLDLLDWPEPVKTMQRNWIGRSTGAKALFAATGADGAALDIEVFTTRPDTLFGATYMVLAPEHELVDELVAPAWPDGTDPRWTYGAATPGESVAAYRRAIASKSDLERQESKAKTGVFLGSYATNPTNGKPVPIFIADYVLAGYGTGAIMAVPGHDQRDWDFAHEFGLPIVEVIAGGDISEGAYAGDGVLVNSGYLDGLDVAAAKEAITARLEAEGRGCARVEYKLRDWLFARQRYWGEPFPIVYDSDGRPHALDEAALPVELPDVPDYSPVLFDPDDADSEPSPPLAKATDWVHVELDLGDGLKPYSRDTNVMPQWAGSSWYELRYTDPHNSERFCAKENEAYWMGPRPAEHGPQDPGGVDLYVGGAEHAVLHLLYARFWHKVLYDLGHVSSREPYRRLVNQGYIQAFAYTDSRGSYVPAEEVVERDGRFFYRGPDGEIEVFQEFGKIGKSLKNSISPDEICDDYGADTLRVYEMSMGPLEASRPWATKDVVGAHRFLQRVWRLVVDEQTGETRVVDGAGRDLPTGTLRLLHRTIAGVSEDYAALRNNTAVAKLIEYTNHLTKEHRDAVPRAAVEPLVLMLAPLAPHMAEELWLRLGHTTSLAHGPFPVADPAYLVEDTVEYPVQVNGKVRGRVTVAADADRDTLEAAALADEKVLAFLAGAQPRKVIVVPGRLVNLVV.

A disordered region spans residues 1-23; that stretch reads MTESPTTSPATGSGAAAPDSDAP. Positions 78 to 89 match the 'HIGH' region motif; it reads PYPSGEGLHVGH. The short motif at 737 to 741 is the 'KMSKS' region element; the sequence is KIGKS. Lysine 740 contacts ATP.

The protein belongs to the class-I aminoacyl-tRNA synthetase family.

The protein localises to the cytoplasm. It catalyses the reaction tRNA(Leu) + L-leucine + ATP = L-leucyl-tRNA(Leu) + AMP + diphosphate. The polypeptide is Leucine--tRNA ligase (Mycolicibacterium paratuberculosis (strain ATCC BAA-968 / K-10) (Mycobacterium paratuberculosis)).